The primary structure comprises 456 residues: UDP-N-acetylglucosamine 1-carboxyvinyltransferase (456 aa).

34–35 lines the phosphoenolpyruvate pocket; it reads KN. Arg-104 is a binding site for UDP-N-acetyl-alpha-D-glucosamine. Cys-128 functions as the Proton donor in the catalytic mechanism. Cys-128 is subject to 2-(S-cysteinyl)pyruvic acid O-phosphothioketal. Positions 319 and 341 each coordinate UDP-N-acetyl-alpha-D-glucosamine.

Belongs to the EPSP synthase family. MurA subfamily.

The protein localises to the cytoplasm. The enzyme catalyses phosphoenolpyruvate + UDP-N-acetyl-alpha-D-glucosamine = UDP-N-acetyl-3-O-(1-carboxyvinyl)-alpha-D-glucosamine + phosphate. It participates in cell wall biogenesis; peptidoglycan biosynthesis. In terms of biological role, cell wall formation. Adds enolpyruvyl to UDP-N-acetylglucosamine. The protein is UDP-N-acetylglucosamine 1-carboxyvinyltransferase of Prochlorococcus marinus (strain AS9601).